The primary structure comprises 371 residues: Cytochrome b (371 aa).

Helical transmembrane passes span 25–45 (FGSMLLTCLVLQVLTGFFLAV), 69–90 (WMMQNLHAIGASMFFICIYIHI), 105–125 (WMSGITLLITLMATALFGYVL), and 170–190 (FFALHFILPFAIISLSSLHII). H75 and H89 together coordinate heme b. 2 residues coordinate heme b: H174 and H188. H193 is an a ubiquinone binding site. 4 helical membrane passes run 218–238 (HKDLLLLTLMMMFLFIIVSFF), 280–300 (LGGALALVASIMILFTTPFTH), 312–332 (LSQLMFWTLVSTFITITWAAT), and 339–358 (FIAISQVTSMLYFTFFLSIP).

Belongs to the cytochrome b family. The cytochrome bc1 complex contains 3 respiratory subunits (MT-CYB, CYC1 and UQCRFS1), 2 core proteins (UQCRC1 and UQCRC2) and probably 6 low-molecular weight proteins. Heme b is required as a cofactor.

It is found in the mitochondrion inner membrane. In terms of biological role, component of the ubiquinol-cytochrome c reductase complex (complex III or cytochrome b-c1 complex) that is part of the mitochondrial respiratory chain. The b-c1 complex mediates electron transfer from ubiquinol to cytochrome c. Contributes to the generation of a proton gradient across the mitochondrial membrane that is then used for ATP synthesis. The protein is Cytochrome b (MT-CYB) of Liasis olivaceus (Olive python).